We begin with the raw amino-acid sequence, 703 residues long: Capsid protein VP1 (703 aa).

The protein belongs to the caliciviridae capsid protein family. Homodimer. Homomultimer. Interacts with the minor capsid protein VP2. May bind to VP3 and Vpg proteins. Cleaved by the viral protease to produce mature capsid protein.

Its subcellular location is the virion. It localises to the host cytoplasm. Capsid protein self assembles to form an icosahedral capsid with a T=3 symmetry, about 38 nm in diameter, and consisting of 180 capsid proteins. A smaller form of capsid with a diameter of 23 nm might be capsid proteins assembled as icosahedron with T=1 symmetry. The capsid encapsulates the genomic RNA and is decorated with VP2 proteins. In San Miguel sea lion virus serotype 4 (SMSV-4), this protein is Capsid protein VP1.